The following is an 899-amino-acid chain: Receptor-like protein kinase At3g21340 (899 aa).

Positions 1–27 (MEYHPQAIRLCALIFISFYALLHLVEA) are cleaved as a signal peptide. Residues 28–522 (QDQKGFISLD…GAKKMNVVIP (495 aa)) are Extracellular-facing. N100, N146, N185, N240, N266, N420, N436, N449, N468, and N475 each carry an N-linked (GlcNAc...) asparagine glycan. LRR repeat units follow at residues 415–438 (IVTSLNLSSSHLTGIIAQGIQNLT), 439–461 (HLQELDLSNNNLTGGIPEFLADI), and 463–485 (SLLVINLSGNNFNGSIPQILLQK). The helical transmembrane segment at 523-543 (IVASVAFVVVLGSALAFFFIF) threads the bilayer. Over 544 to 899 (KKKKTSNSQD…FDIGATPDAR (356 aa)) the chain is Cytoplasmic. Position 583 is a phosphothreonine (T583). A Protein kinase domain is found at 592–865 (NNFERVLGKG…QVVIELNECL (274 aa)). ATP-binding positions include 598–606 (LGKGGFGMV) and K620. A Phosphotyrosine modification is found at Y665. D717 acts as the Proton acceptor in catalysis. S751 is subject to Phosphoserine. Phosphothreonine occurs at positions 752 and 757. The residue at position 765 (Y765) is a Phosphotyrosine.

The protein belongs to the protein kinase superfamily. Ser/Thr protein kinase family. Autophosphorylated on Tyr and Thr residues.

It localises to the cell membrane. It catalyses the reaction L-seryl-[protein] + ATP = O-phospho-L-seryl-[protein] + ADP + H(+). The enzyme catalyses L-threonyl-[protein] + ATP = O-phospho-L-threonyl-[protein] + ADP + H(+). It carries out the reaction L-tyrosyl-[protein] + ATP = O-phospho-L-tyrosyl-[protein] + ADP + H(+). Functionally, probable receptor with a dual specificity kinase activity acting on both serine/threonine- and tyrosine-containing substrates. This chain is Receptor-like protein kinase At3g21340, found in Arabidopsis thaliana (Mouse-ear cress).